Consider the following 346-residue polypeptide: Methylthioribose-1-phosphate isomerase (346 aa).

Substrate-binding positions include 48 to 50 (RGA), arginine 88, and glutamine 192. The active-site Proton donor is aspartate 233. 243–244 (NK) serves as a coordination point for substrate.

The protein belongs to the eIF-2B alpha/beta/delta subunits family. MtnA subfamily.

It carries out the reaction 5-(methylsulfanyl)-alpha-D-ribose 1-phosphate = 5-(methylsulfanyl)-D-ribulose 1-phosphate. It functions in the pathway amino-acid biosynthesis; L-methionine biosynthesis via salvage pathway; L-methionine from S-methyl-5-thio-alpha-D-ribose 1-phosphate: step 1/6. Its function is as follows. Catalyzes the interconversion of methylthioribose-1-phosphate (MTR-1-P) into methylthioribulose-1-phosphate (MTRu-1-P). This chain is Methylthioribose-1-phosphate isomerase, found in Alcanivorax borkumensis (strain ATCC 700651 / DSM 11573 / NCIMB 13689 / SK2).